Consider the following 167-residue polypeptide: Large ribosomal subunit protein uL23 (167 aa).

Residues 1-118 (MNVNEIIKGP…TEEKAKIAKK (118 aa)) are large ribosomal subunit protein uL23. Disordered regions lie at residues 91 to 112 (FEDESPQDQKDSETVSENTEEK) and 136 to 167 (KQAELAKKDSETNENQEKRIENQTENQENSAN). Basic and acidic residues-rich tracts occupy residues 97-112 (QDQKDSETVSENTEEK) and 136-157 (KQAELAKKDSETNENQEKRIEN). The tract at residues 119–167 (KAELEAKNKEIAEKLAKKQAELAKKDSETNENQEKRIENQTENQENSAN) is unknown. A compositionally biased stretch (polar residues) spans 158-167 (QTENQENSAN).

The protein belongs to the universal ribosomal protein uL23 family. Part of the 50S ribosomal subunit. Contacts protein L29, and trigger factor when it is bound to the ribosome.

In terms of biological role, one of the early assembly proteins it binds 23S rRNA. One of the proteins that surrounds the polypeptide exit tunnel on the outside of the ribosome. Forms the main docking site for trigger factor binding to the ribosome. The sequence is that of Large ribosomal subunit protein uL23 from Mesomycoplasma hyopneumoniae (strain J / ATCC 25934 / NCTC 10110) (Mycoplasma hyopneumoniae).